The chain runs to 230 residues: Uracil-DNA glycosylase (230 aa).

The active-site Proton acceptor is Asp65.

The protein belongs to the uracil-DNA glycosylase (UDG) superfamily. UNG family.

The protein resides in the cytoplasm. It catalyses the reaction Hydrolyzes single-stranded DNA or mismatched double-stranded DNA and polynucleotides, releasing free uracil.. In terms of biological role, excises uracil residues from the DNA which can arise as a result of misincorporation of dUMP residues by DNA polymerase or due to deamination of cytosine. The sequence is that of Uracil-DNA glycosylase from Pediococcus pentosaceus (strain ATCC 25745 / CCUG 21536 / LMG 10740 / 183-1w).